Here is a 97-residue protein sequence, read N- to C-terminus: Large ribosomal subunit protein uL23 (97 aa).

It belongs to the universal ribosomal protein uL23 family. As to quaternary structure, part of the 50S ribosomal subunit. Contacts protein L29, and trigger factor when it is bound to the ribosome.

One of the early assembly proteins it binds 23S rRNA. One of the proteins that surrounds the polypeptide exit tunnel on the outside of the ribosome. Forms the main docking site for trigger factor binding to the ribosome. The sequence is that of Large ribosomal subunit protein uL23 from Clostridium perfringens (strain SM101 / Type A).